Here is a 1325-residue protein sequence, read N- to C-terminus: Protein suppressor of sable (1325 aa).

Disordered regions lie at residues 1-36 (MSVALADEPLIDLEEDLEDGEIDDDEEDEQQSSKIQ) and 74-326 (VCLQ…GGSN). Positions 9-30 (PLIDLEEDLEDGEIDDDEEDEQ) are enriched in acidic residues. Residues 119–131 (RSSNQDTSDQSLE) are compositionally biased toward polar residues. The segment at 138–327 (ATANPLLQST…GQEKMGGSNR (190 aa)) is highly charged. Residues 149 to 158 (SSRRRKRKKE) show a composition bias toward basic residues. Positions 149–179 (SSRRRKRKKEREREQKKDKEQQNRSRRDEND) form a coiled coil. Over residues 159-178 (REREQKKDKEQQNRSRRDEN) the composition is skewed to basic and acidic residues. Residues 236 to 246 (AGLGAGGGGGY) show a composition bias toward gly residues. A coiled-coil region spans residues 276–296 (NEKEHQRGVNNRKRRDRDRLE). 2 consecutive C3H1-type zinc fingers follow at residues 330–357 (PRKLELCKFYLMDCCAKRDKCSYMHKEF) and 358–381 (PCKYYYLGMDCYAGDDCLFYHGEP). Residues 444 to 478 (KRQDHQMQQQQQQLQHQQLQQQQEQQQTQQQAAAD) are a coiled coil. Residues 499–509 (KRKSRWTEKMG) are compositionally biased toward basic and acidic residues. 8 disordered regions span residues 499 to 535 (KRKSRWTEKMGAKAAAGAAGSSERDSTSPDAKPLPPH), 588 to 622 (KAEDAKPQTQAELESSTPPSKRETEANNSNSKSNG), 639 to 695 (FSGN…PSVF), 710 to 745 (SARQLLPASATSPNQENAHLPGGDQSTHKSAPIGGG), 780 to 835 (AHSG…ALPP), 979 to 1058 (DLET…GGSK), 1143 to 1170 (EPNGNGAALGGGGDSGGGVGGGGGGGGV), and 1295 to 1325 (RGGHFPGGGSGGNGNGNNRNQRGGNHRNRNI). Residue serine 524 is modified to Phosphoserine. The segment covering 594-606 (PQTQAELESSTPP) has biased composition (polar residues). At threonine 604 the chain carries Phosphothreonine. Acidic residues predominate over residues 644 to 668 (PLDDDRDDDEQLIIDDGNDSTAEED). Serine 663 bears the Phosphoserine mark. The residue at position 664 (threonine 664) is a Phosphothreonine. Residues 710 to 726 (SARQLLPASATSPNQEN) show a composition bias toward polar residues. The span at 790–800 (SNENSNSNSHS) shows a compositional bias: low complexity. The span at 1003-1015 (SVPPPSMRVPPPN) shows a compositional bias: pro residues. Residues 1021–1033 (PTVRTDPRRDPRR) are compositionally biased toward basic and acidic residues. Over residues 1042–1056 (GASTANTTAPNASGG) the composition is skewed to low complexity. Gly residues-rich tracts occupy residues 1149–1170 (AALGGGGDSGGGVGGGGGGGGV) and 1295–1309 (RGGHFPGGGSGGNGN).

It belongs to the suppressor of sable family. As to quaternary structure, interacts with Wdr82.

It localises to the nucleus. The protein localises to the chromosome. RNA-binding protein that suppresses transcription of some RNAs. Together with Wdr82, part of a transcription termination checkpoint that promotes transcription termination of RNAs and their subsequent degradation by the nuclear exosome. Promotes transcription termination of aberrant RNAs, transcripts from genes containing a transposon inserted at their very 5' end or RNAs from heat-shock-inducible repetitive element. Binds RNA preferentially at a sequence that resembles a cryptic 5'-splice site. The sequence is that of Protein suppressor of sable from Drosophila melanogaster (Fruit fly).